We begin with the raw amino-acid sequence, 256 residues long: Myeloblastin (256 aa).

A signal peptide spans 1–25; the sequence is MAHRPPSPALASVLLALLLSGAARA. Positions 26-27 are excised as a propeptide; that stretch reads AE. The 221-residue stretch at 28 to 248 folds into the Peptidase S1 domain; it reads IVGGHEAQPH…YVDWIRSTLR (221 aa). An intrachain disulfide couples C56 to C72. Residues H71 and D118 each act as charge relay system in the active site. 2 N-linked (GlcNAc...) asparagine glycosylation sites follow: N129 and N174. 3 disulfide bridges follow: C152–C209, C182–C188, and C199–C224. Residue S203 is the Charge relay system of the active site. The propeptide occupies 249 to 256; it reads RVEAKGRP.

Belongs to the peptidase S1 family. Elastase subfamily. As to quaternary structure, may form dimers. Interacts with CD177; the interaction tethers PRTN3 to the cell surface; the interaction is direct. Interacts with SERPINB1. Interacts with ADGRG3. Expressed in polymorphonuclear leukocytes (at protein level). Expressed in neutrophils (at protein level). Expressed in differentiating neutrophils.

Its subcellular location is the cytoplasmic granule. The protein localises to the secreted. The protein resides in the cell membrane. It localises to the membrane raft. The catalysed reaction is Hydrolysis of proteins, including elastin, by preferential cleavage: -Ala-|-Xaa- &gt; -Val-|-Xaa-.. Inhibited by phenylmethanesulfonyl fluoride (PMSF) and diisopropyl fluorophosphate (DFP). Functionally, serine protease that degrades elastin, fibronectin, laminin, vitronectin, and collagen types I, III, and IV (in vitro). By cleaving and activating receptor F2RL1/PAR-2, enhances endothelial cell barrier function and thus vascular integrity during neutrophil transendothelial migration. Plays a role in neutrophil transendothelial migration, probably when associated with CD177. Triggers inflammatory processes in neutrophils by interacting with ADGRG3 upstream of F2RL1/PAR2 activation. The protein is Myeloblastin (PRTN3) of Homo sapiens (Human).